A 154-amino-acid polypeptide reads, in one-letter code: Ribosome maturation factor RimP (154 aa).

The protein belongs to the RimP family.

The protein resides in the cytoplasm. In terms of biological role, required for maturation of 30S ribosomal subunits. The sequence is that of Ribosome maturation factor RimP from Heliobacterium modesticaldum (strain ATCC 51547 / Ice1).